Consider the following 376-residue polypeptide: 26S proteasome non-ATPase regulatory subunit 13 (376 aa).

In terms of domain architecture, PCI spans 171–338 (SYYKDALRFL…KRVHMTWVQP (168 aa)).

Belongs to the proteasome subunit S11 family. Component of the 19S proteasome regulatory particle complex. The 26S proteasome consists of a 20S core particle (CP) and two 19S regulatory subunits (RP). The regulatory particle is made of a lid composed of 9 subunits including PSMD13, a base containing 6 ATPases and few additional components.

Component of the 26S proteasome, a multiprotein complex involved in the ATP-dependent degradation of ubiquitinated proteins. This complex plays a key role in the maintenance of protein homeostasis by removing misfolded or damaged proteins, which could impair cellular functions, and by removing proteins whose functions are no longer required. Therefore, the proteasome participates in numerous cellular processes, including cell cycle progression, apoptosis, or DNA damage repair. The protein is 26S proteasome non-ATPase regulatory subunit 13 (PSMD13) of Bos taurus (Bovine).